The sequence spans 517 residues: Ribose import ATP-binding protein RbsA 1 (517 aa).

ABC transporter domains lie at 11–251 (LEMR…VGRD) and 263–507 (YDPG…ALAT). Residue 43-50 (GENGAGKS) participates in ATP binding.

This sequence belongs to the ABC transporter superfamily. Ribose importer (TC 3.A.1.2.1) family. As to quaternary structure, the complex is composed of an ATP-binding protein (RbsA), two transmembrane proteins (RbsC) and a solute-binding protein (RbsB).

It is found in the cell inner membrane. The catalysed reaction is D-ribose(out) + ATP + H2O = D-ribose(in) + ADP + phosphate + H(+). Its function is as follows. Part of the ABC transporter complex RbsABC involved in ribose import. Responsible for energy coupling to the transport system. The chain is Ribose import ATP-binding protein RbsA 1 from Burkholderia ambifaria (strain ATCC BAA-244 / DSM 16087 / CCUG 44356 / LMG 19182 / AMMD) (Burkholderia cepacia (strain AMMD)).